Here is a 699-residue protein sequence, read N- to C-terminus: Elongation factor G (699 aa).

The 282-residue stretch at 8-289 (ERYRNIGISA…AVVEYMPAPT (282 aa)) folds into the tr-type G domain. GTP is bound by residues 17–24 (AHIDAGKT), 88–92 (DTPGH), and 142–145 (NKMD).

The protein belongs to the TRAFAC class translation factor GTPase superfamily. Classic translation factor GTPase family. EF-G/EF-2 subfamily.

The protein localises to the cytoplasm. Catalyzes the GTP-dependent ribosomal translocation step during translation elongation. During this step, the ribosome changes from the pre-translocational (PRE) to the post-translocational (POST) state as the newly formed A-site-bound peptidyl-tRNA and P-site-bound deacylated tRNA move to the P and E sites, respectively. Catalyzes the coordinated movement of the two tRNA molecules, the mRNA and conformational changes in the ribosome. The sequence is that of Elongation factor G from Variovorax paradoxus (strain S110).